A 182-amino-acid chain; its full sequence is Adenine phosphoribosyltransferase (182 aa).

Belongs to the purine/pyrimidine phosphoribosyltransferase family. In terms of assembly, homodimer.

The protein localises to the cytoplasm. It catalyses the reaction AMP + diphosphate = 5-phospho-alpha-D-ribose 1-diphosphate + adenine. It participates in purine metabolism; AMP biosynthesis via salvage pathway; AMP from adenine: step 1/1. Catalyzes a salvage reaction resulting in the formation of AMP, that is energically less costly than de novo synthesis. This is Adenine phosphoribosyltransferase from Campylobacter hominis (strain ATCC BAA-381 / DSM 21671 / CCUG 45161 / LMG 19568 / NCTC 13146 / CH001A).